A 229-amino-acid chain; its full sequence is C-&gt;U-editing enzyme APOBEC-1 (229 aa).

In terms of domain architecture, CMP/dCMP-type deaminase spans 10–134; that stretch reads VDPTLRRRIE…PRNRQGLRDL (125 aa). A Zn(2+)-binding site is contributed by histidine 61. The active-site Proton donor is the glutamate 63. Residues cysteine 93 and cysteine 96 each coordinate Zn(2+).

This sequence belongs to the cytidine and deoxycytidylate deaminase family. As to quaternary structure, homodimer. Interacts with A1CF; form an mRNA editing complex. Interacts with RBM47; form an mRNA editing complex. Found in a complex with CELF2/CUGBP2 and A1CF. Interacts with HNRPAB. Interacts with SYNCRIP. Zn(2+) serves as cofactor. As to expression, expressed in the liver as well as small intestine.

The protein resides in the cytoplasm. It is found in the nucleus. The catalysed reaction is a cytidine in mRNA + H2O + H(+) = a uridine in mRNA + NH4(+). It carries out the reaction cytidine(6666) in apoB mRNA + H2O + H(+) = uridine(6666) in apoB mRNA + NH4(+). Functionally, cytidine deaminase catalyzing the cytidine to uridine postranscriptional editing of a variety of mRNAs. Form complexes with cofactors that confer differential editing activity and selectivity. Responsible for the postranscriptional editing of a CAA codon for Gln to a UAA codon for stop in the apolipoprotein B mRNA. Also involved in CGA (Arg) to UGA (Stop) editing in the NF1 mRNA. May also play a role in the epigenetic regulation of gene expression by participating in DNA demethylation. The chain is C-&gt;U-editing enzyme APOBEC-1 from Rattus norvegicus (Rat).